A 323-amino-acid chain; its full sequence is tRNA dimethylallyltransferase (323 aa).

12–19 serves as a coordination point for ATP; sequence GPTASGKT. 14-19 provides a ligand contact to substrate; it reads TASGKT. Interaction with substrate tRNA regions lie at residues 37-40 and 161-165; these read DSAL and QRLVR.

Belongs to the IPP transferase family. Monomer. Mg(2+) is required as a cofactor.

The catalysed reaction is adenosine(37) in tRNA + dimethylallyl diphosphate = N(6)-dimethylallyladenosine(37) in tRNA + diphosphate. Catalyzes the transfer of a dimethylallyl group onto the adenine at position 37 in tRNAs that read codons beginning with uridine, leading to the formation of N6-(dimethylallyl)adenosine (i(6)A). The polypeptide is tRNA dimethylallyltransferase (Stutzerimonas stutzeri (strain A1501) (Pseudomonas stutzeri)).